Here is a 438-residue protein sequence, read N- to C-terminus: Ubiquitin carboxyl-terminal hydrolase 27 (438 aa).

Residues 78-421 (RGLINLGNTC…EGYLLFYHKQ (344 aa)) form the USP domain. Catalysis depends on Cys-87, which acts as the Nucleophile. His-380 serves as the catalytic Proton acceptor.

It belongs to the peptidase C19 family. Interacts with phosphorylated BCL2L11 isoform BIMEL; this interaction leads to BCL2L11 deubiquitination and stabilization.

The protein localises to the cytoplasm. The protein resides in the cytosol. It is found in the nucleus. The enzyme catalyses Thiol-dependent hydrolysis of ester, thioester, amide, peptide and isopeptide bonds formed by the C-terminal Gly of ubiquitin (a 76-residue protein attached to proteins as an intracellular targeting signal).. Its function is as follows. Deubiquitinase involved in innate antiviral immunity by mediating deubiquitination of CGAS and RIGI. Negatively regulates RIGI by mediating 'Lys-63'-linked deubiquitination of RIGI, inhibiting type I interferon signaling. Also regulates 'Lys-63'-linked ubiquitination level of MDA5/IFIH1. Acts as a positive regulator of the cGAS-STING pathway by catalyzing 'Lys-48'-linked deubiquitination of CGAS, thereby promoting its stabilization. Can reduce the levels of BCL2L11/BIM ubiquitination and stabilize BCL2L11 in response to the RAF-MAPK-degradation signal. By acting on BCL2L11 levels, may counteract the anti-apoptotic effects of MAPK activity. The chain is Ubiquitin carboxyl-terminal hydrolase 27 from Mus musculus (Mouse).